The sequence spans 698 residues: Long-chain-fatty-acid--CoA ligase 1 (698 aa).

Met1 is subject to N-acetylmethionine. The residue at position 9 (Tyr9) is a 3'-nitrotyrosine. Position 84 is a phosphotyrosine (Tyr84). Residue Ser135 is glycosylated (O-linked (GlcNAc) serine). Lys356 and Lys386 each carry N6-acetyllysine. Ser620 carries the post-translational modification Phosphoserine. N6-acetyllysine is present on Lys632.

This sequence belongs to the ATP-dependent AMP-binding enzyme family. The cofactor is Mg(2+).

It is found in the microsome membrane. Its subcellular location is the mitochondrion outer membrane. The protein resides in the peroxisome membrane. It localises to the endoplasmic reticulum membrane. It catalyses the reaction a long-chain fatty acid + ATP + CoA = a long-chain fatty acyl-CoA + AMP + diphosphate. The catalysed reaction is (5Z,8Z,11Z,14Z)-eicosatetraenoate + ATP + CoA = (5Z,8Z,11Z,14Z)-eicosatetraenoyl-CoA + AMP + diphosphate. It carries out the reaction 3,7,11,15-tetramethylhexadecanoate + ATP + CoA = phytanoyl-CoA + AMP + diphosphate. The enzyme catalyses hexadecanoate + ATP + CoA = hexadecanoyl-CoA + AMP + diphosphate. It catalyses the reaction (E)-hexadec-2-enoate + ATP + CoA = (2E)-hexadecenoyl-CoA + AMP + diphosphate. The catalysed reaction is 2,6,10,14-tetramethylpentadecanoate + ATP + CoA = pristanoyl-CoA + AMP + diphosphate. It carries out the reaction 14,15-epoxy-(5Z,8Z,11Z)-eicosatrienoate + ATP + CoA = 14,15-epoxy-(5Z,8Z,11Z)-eicosatrienoyl-CoA + AMP + diphosphate. The enzyme catalyses 5-hydroxy-(6E,8Z,11Z,14Z)-eicosatetraenoate + ATP + CoA = 5-hydroxy-(6E,8Z,11Z,14Z)-eicosatetraenoyl-CoA + AMP + diphosphate. It catalyses the reaction 12-hydroxy-(5Z,8Z,10E,14Z)-eicosatetraenoate + ATP + CoA = 12-hydroxy-(5Z,8Z,10E,14Z)-eicosatetraenoyl-CoA + AMP + diphosphate. The catalysed reaction is 15-hydroxy-(5Z,8Z,11Z,13E)-eicosatetraenoate + ATP + CoA = 15-hydroxy-(5Z,8Z,11Z,13E)-eicosatetraenoyl-CoA + AMP + diphosphate. It carries out the reaction (9Z)-octadecenoate + ATP + CoA = (9Z)-octadecenoyl-CoA + AMP + diphosphate. Inhibited at high temperature and by arachidonate. Functionally, catalyzes the conversion of long-chain fatty acids to their active form acyl-CoAs for both synthesis of cellular lipids, and degradation via beta-oxidation. Preferentially uses palmitoleate, oleate and linoleate. Preferentially activates arachidonate than epoxyeicosatrienoic acids (EETs) or hydroxyeicosatrienoic acids (HETEs). The chain is Long-chain-fatty-acid--CoA ligase 1 from Cavia porcellus (Guinea pig).